The chain runs to 238 residues: Ribitol-5-phosphate cytidylyltransferase (238 aa).

CTP is bound by residues 7–10 and 80–86; these read FAGG and GETGQES.

The protein belongs to the IspD/TarI cytidylyltransferase family. TarI subfamily.

It carries out the reaction D-ribitol 5-phosphate + CTP + H(+) = CDP-L-ribitol + diphosphate. Functionally, catalyzes the transfer of the cytidylyl group of CTP to D-ribitol 5-phosphate. In Vibrio parahaemolyticus serotype O3:K6 (strain RIMD 2210633), this protein is Ribitol-5-phosphate cytidylyltransferase.